The sequence spans 182 residues: Putative manganese efflux pump MntP 1 (182 aa).

Helical transmembrane passes span 4–24 (LLLLSLALSMDAFAVSLGLGA), 42–62 (IFQGIMPLLGFFVGVTFIAFI), 63–83 (SAFDHYLAFGILALIGAKMIY), 103–123 (LILSIATSIDALAAGVSLHLI), 127–147 (VFLSCTIIAFTTFLLSYLGVL), and 162–182 (ILGGVILIGIGSKILLEHLFF).

This sequence belongs to the MntP (TC 9.B.29) family.

It is found in the cell inner membrane. Functionally, probably functions as a manganese efflux pump. This Wolinella succinogenes (strain ATCC 29543 / DSM 1740 / CCUG 13145 / JCM 31913 / LMG 7466 / NCTC 11488 / FDC 602W) (Vibrio succinogenes) protein is Putative manganese efflux pump MntP 1.